Reading from the N-terminus, the 335-residue chain is Acetyl-coenzyme A carboxylase carboxyl transferase subunit alpha (335 aa).

In terms of domain architecture, CoA carboxyltransferase C-terminal spans 40 to 294 (QLETLATRRR…KASIERHLSE (255 aa)).

Belongs to the AccA family. In terms of assembly, acetyl-CoA carboxylase is a heterohexamer composed of biotin carboxyl carrier protein (AccB), biotin carboxylase (AccC) and two subunits each of ACCase subunit alpha (AccA) and ACCase subunit beta (AccD).

Its subcellular location is the cytoplasm. It carries out the reaction N(6)-carboxybiotinyl-L-lysyl-[protein] + acetyl-CoA = N(6)-biotinyl-L-lysyl-[protein] + malonyl-CoA. Its pathway is lipid metabolism; malonyl-CoA biosynthesis; malonyl-CoA from acetyl-CoA: step 1/1. In terms of biological role, component of the acetyl coenzyme A carboxylase (ACC) complex. First, biotin carboxylase catalyzes the carboxylation of biotin on its carrier protein (BCCP) and then the CO(2) group is transferred by the carboxyltransferase to acetyl-CoA to form malonyl-CoA. This Prochlorococcus marinus (strain MIT 9515) protein is Acetyl-coenzyme A carboxylase carboxyl transferase subunit alpha.